Reading from the N-terminus, the 146-residue chain is Interleukin-13 (146 aa).

A signal peptide spans 1–24 (MHPLLNPLLLALGLMALLLTTVIA). Residues Asn52, Asn63, Asn71, and Asn86 are each glycosylated (N-linked (GlcNAc...) asparagine). Intrachain disulfides connect Cys62–Cys90 and Cys78–Cys104.

Belongs to the IL-4/IL-13 family. In terms of assembly, interacts with IL13RA2.

Its subcellular location is the secreted. Cytokine that plays important roles in allergic inflammation and immune response to parasite infection. Synergizes with IL2 in regulating interferon-gamma synthesis. Stimulates B-cell proliferation, and activation of eosinophils, basophils, and mast cells. Plays an important role in controlling IL33 activity by modulating the production of transmembrane and soluble forms of interleukin-1 receptor-like 1/IL1RL1. Displays the capacity to antagonize Th1-driven proinflammatory immune response and downregulates synthesis of many proinflammatory cytokines including IL1, IL6, IL10, IL12 and TNF-alpha through a mechanism that partially involves suppression of NF-kappa-B. Also functions on nonhematopoietic cells, including endothelial cells where it induces vascular cell adhesion protein 1/VCAM1, which is important in the recruitment of eosinophils. Exerts its biological effects through its receptors which comprises the IL4R chain and the IL13RA1 chain, to activate JAK1 and TYK2, leading to the activation of STAT6. Aside from IL13RA1, another receptor IL13RA2 acts as a high affinity decoy for IL13 and mediates internalization and depletion of extracellular IL13. In Homo sapiens (Human), this protein is Interleukin-13 (IL13).